Here is a 1103-residue protein sequence, read N- to C-terminus: PH, RCC1 and FYVE domains-containing protein 1 (1103 aa).

In terms of domain architecture, PH spans 22–123 (KKGTQLLKYG…IWIGGLKTLI (102 aa)). The disordered stretch occupies residues 144–233 (DASRELTSSS…SSSHGSAADD (90 aa)). Low complexity-rich tracts occupy residues 151–169 (SSSPSSSSASASRGHSSPG) and 217–231 (SVSSAQSSSSHGSAA). RCC1 repeat units follow at residues 237–298 (LGDV…FVTR), 299–351 (QGEI…AVTL), 353–406 (GELY…LITS), 407–458 (YGRL…AVVE), 471–522 (SGKL…GLTT), 524–574 (GQVF…ALTS), and 575–626 (RNEV…AICL). An FYVE-type zinc finger spans residues 632–694 (GAEQSQCSTC…VCDSCYVKLS (63 aa)). 8 residues coordinate Zn(2+): C638, C641, C654, C657, C662, C665, C686, and C689. The disordered stretch occupies residues 783-818 (ATPKLAQAPSGISSRSVSPFSRRSSPPRSATPMPST). Residues 791–818 (PSGISSRSVSPFSRRSSPPRSATPMPST) show a composition bias toward low complexity. The stretch at 828–904 (ADNMKKTNEI…IAQLKDVAEK (77 aa)) forms a coiled coil. A compositionally biased stretch (polar residues) spans 962–979 (NLQSPKQTPRASERNSNA). A disordered region spans residues 962–988 (NLQSPKQTPRASERNSNAYPADPRLSS). In terms of domain architecture, BRX spans 1023–1078 (AEWIEQYEPGVYITLVALHDGTRDLRRVRFSRRRFGEHQAETWWSENREKVYEKYN). Positions 1079-1103 (VRVSEKSTASQTHRDRDEEEEDIPH) are disordered.

In terms of tissue distribution, mostly expressed in flowers, and, to a lower extent, in stems, leaves, siliques, seeds.

In terms of biological role, binds to phosphatidic acid and to phosphoinositides such as PtdIns3P, PtdIns(3,4)P(2), PtdIns(3,4,5)P(3) and PtdIns(4,5)P(2). Catalyzes guanine nucleotide exchange on specific Rab proteins. In Arabidopsis thaliana (Mouse-ear cress), this protein is PH, RCC1 and FYVE domains-containing protein 1.